The chain runs to 211 residues: MSGTLVLVRHGQSDWNLKNLFTGWKDPDLTELGIQEANAGGAALAEYGIKFDVAYTSALVRAQHTLKLILDKVGQPDLQTIRDQALNERDYGDLSGLNKDDARAKWGEEQVHVWRRSYDVPPPGGESLRDTGARVWPYYLTEILPRVLHGEKVLVAAHGNSLRSLVMVLDKLTKEGVLALNLATGVPMVYKLHADSTVASKEVLGDMSGAH.

Substrate is bound by residues 9-16, 22-23, Arg61, 88-91, Lys99, 115-116, and 159-160; these read RHGQSDWN, TG, ERDY, RR, and GN. His10 serves as the catalytic Tele-phosphohistidine intermediate. The active-site Proton donor/acceptor is the Glu88.

This sequence belongs to the phosphoglycerate mutase family. BPG-dependent PGAM subfamily. As to quaternary structure, homodimer.

The catalysed reaction is (2R)-2-phosphoglycerate = (2R)-3-phosphoglycerate. It functions in the pathway carbohydrate degradation; glycolysis; pyruvate from D-glyceraldehyde 3-phosphate: step 3/5. Catalyzes the interconversion of 2-phosphoglycerate and 3-phosphoglycerate. This is 2,3-bisphosphoglycerate-dependent phosphoglycerate mutase from Rhizobium etli (strain CIAT 652).